We begin with the raw amino-acid sequence, 235 residues long: Phosphoribosylaminoimidazole-succinocarboxamide synthase (235 aa).

The protein belongs to the SAICAR synthetase family.

It carries out the reaction 5-amino-1-(5-phospho-D-ribosyl)imidazole-4-carboxylate + L-aspartate + ATP = (2S)-2-[5-amino-1-(5-phospho-beta-D-ribosyl)imidazole-4-carboxamido]succinate + ADP + phosphate + 2 H(+). It participates in purine metabolism; IMP biosynthesis via de novo pathway; 5-amino-1-(5-phospho-D-ribosyl)imidazole-4-carboxamide from 5-amino-1-(5-phospho-D-ribosyl)imidazole-4-carboxylate: step 1/2. In Streptococcus pneumoniae serotype 2 (strain D39 / NCTC 7466), this protein is Phosphoribosylaminoimidazole-succinocarboxamide synthase.